Consider the following 597-residue polypeptide: Putative Xaa-Pro dipeptidyl-peptidase (597 aa).

Active-site charge relay system residues include S224, D336, and H367.

Belongs to the peptidase S15 family.

It carries out the reaction Hydrolyzes Xaa-Pro-|- bonds to release unblocked, N-terminal dipeptides from substrates including Ala-Pro-|-p-nitroanilide and (sequentially) Tyr-Pro-|-Phe-Pro-|-Gly-Pro-|-Ile.. The chain is Putative Xaa-Pro dipeptidyl-peptidase from Bacillus anthracis.